Reading from the N-terminus, the 344-residue chain is Phosphate acyltransferase (344 aa).

The protein belongs to the PlsX family. In terms of assembly, homodimer. Probably interacts with PlsY.

The protein localises to the cytoplasm. The enzyme catalyses a fatty acyl-[ACP] + phosphate = an acyl phosphate + holo-[ACP]. The protein operates within lipid metabolism; phospholipid metabolism. In terms of biological role, catalyzes the reversible formation of acyl-phosphate (acyl-PO(4)) from acyl-[acyl-carrier-protein] (acyl-ACP). This enzyme utilizes acyl-ACP as fatty acyl donor, but not acyl-CoA. This Enterobacter sp. (strain 638) protein is Phosphate acyltransferase.